The chain runs to 506 residues: Maturase K (506 aa).

The protein belongs to the intron maturase 2 family. MatK subfamily.

The protein localises to the plastid. The protein resides in the chloroplast. Its function is as follows. Usually encoded in the trnK tRNA gene intron. Probably assists in splicing its own and other chloroplast group II introns. The chain is Maturase K from Jasminum nudiflorum (Winter jasmine).